A 216-amino-acid chain; its full sequence is Imidazole glycerol phosphate synthase subunit HisH (216 aa).

The 215-residue stretch at 2 to 216 folds into the Glutamine amidotransferase type-1 domain; that stretch reads RVAIIDYGSG…LISNFLRWKP (215 aa). The Nucleophile role is filled by cysteine 88. Catalysis depends on residues histidine 196 and glutamate 198.

As to quaternary structure, heterodimer of HisH and HisF.

The protein resides in the cytoplasm. It carries out the reaction 5-[(5-phospho-1-deoxy-D-ribulos-1-ylimino)methylamino]-1-(5-phospho-beta-D-ribosyl)imidazole-4-carboxamide + L-glutamine = D-erythro-1-(imidazol-4-yl)glycerol 3-phosphate + 5-amino-1-(5-phospho-beta-D-ribosyl)imidazole-4-carboxamide + L-glutamate + H(+). The enzyme catalyses L-glutamine + H2O = L-glutamate + NH4(+). The protein operates within amino-acid biosynthesis; L-histidine biosynthesis; L-histidine from 5-phospho-alpha-D-ribose 1-diphosphate: step 5/9. Functionally, IGPS catalyzes the conversion of PRFAR and glutamine to IGP, AICAR and glutamate. The HisH subunit catalyzes the hydrolysis of glutamine to glutamate and ammonia as part of the synthesis of IGP and AICAR. The resulting ammonia molecule is channeled to the active site of HisF. The polypeptide is Imidazole glycerol phosphate synthase subunit HisH (Agrobacterium fabrum (strain C58 / ATCC 33970) (Agrobacterium tumefaciens (strain C58))).